The primary structure comprises 266 residues: Dihydropteroate synthase (266 aa).

Residues 12-260 (AAIMGILNVT…DVKANQDIVA (249 aa)) form the Pterin-binding domain. Mg(2+) is bound at residue asparagine 19. (7,8-dihydropterin-6-yl)methyl diphosphate-binding positions include threonine 59, aspartate 93, asparagine 112, aspartate 176, lysine 212, and 248 to 250 (RVH).

Belongs to the DHPS family. In terms of assembly, homodimer or homotrimer. It depends on Mg(2+) as a cofactor.

It carries out the reaction (7,8-dihydropterin-6-yl)methyl diphosphate + 4-aminobenzoate = 7,8-dihydropteroate + diphosphate. It functions in the pathway cofactor biosynthesis; tetrahydrofolate biosynthesis; 7,8-dihydrofolate from 2-amino-4-hydroxy-6-hydroxymethyl-7,8-dihydropteridine diphosphate and 4-aminobenzoate: step 1/2. In terms of biological role, catalyzes the condensation of para-aminobenzoate (pABA) with 6-hydroxymethyl-7,8-dihydropterin diphosphate (DHPt-PP) to form 7,8-dihydropteroate (H2Pte), the immediate precursor of folate derivatives. The sequence is that of Dihydropteroate synthase (folP) from Streptococcus pyogenes serotype M1.